The chain runs to 544 residues: Sphingosine-1-phosphate lyase (544 aa).

Residues 1–29 (MDSFSYSSMKSMLIQARGSLNSRLSEFEP) are Lumenal-facing. The chain crosses the membrane as a helical; Signal-anchor for type III membrane protein span at residues 30–50 (LVLLLVPLVSLFLAQIIGSVF). The Cytoplasmic segment spans residues 51-544 (GVVHEKGLKA…LLVSFMDSQY (494 aa)). The residue at position 349 (lysine 349) is an N6-(pyridoxal phosphate)lysine.

This sequence belongs to the group II decarboxylase family. Sphingosine-1-phosphate lyase subfamily. Pyridoxal 5'-phosphate serves as cofactor. Expressed in the peripheral parts of leaves and the bases of trichomes.

The protein resides in the endoplasmic reticulum membrane. It catalyses the reaction sphinganine 1-phosphate = hexadecanal + phosphoethanolamine. The protein operates within lipid metabolism; sphingolipid metabolism. Cleaves phosphorylated sphingoid bases (PSBs), such as sphingosine-1-phosphate, into fatty aldehydes and phosphoethanolamine. May play a minor role in maintenance of sphingolipid metabolism during normal plant development and growth, but be required for maintaining sphingoid long chain bases (LCB) and their phosphorylated derivatives (LCB-P) levels when sphingolipid metabolism is perturbed. May play a role in dehydration stress. This chain is Sphingosine-1-phosphate lyase (DPL1), found in Arabidopsis thaliana (Mouse-ear cress).